We begin with the raw amino-acid sequence, 184 residues long: Adenine phosphoribosyltransferase (184 aa).

Belongs to the purine/pyrimidine phosphoribosyltransferase family. Homodimer.

The protein localises to the cytoplasm. It catalyses the reaction AMP + diphosphate = 5-phospho-alpha-D-ribose 1-diphosphate + adenine. It functions in the pathway purine metabolism; AMP biosynthesis via salvage pathway; AMP from adenine: step 1/1. Its function is as follows. Catalyzes a salvage reaction resulting in the formation of AMP, that is energically less costly than de novo synthesis. The sequence is that of Adenine phosphoribosyltransferase from Shewanella putrefaciens (strain CN-32 / ATCC BAA-453).